Consider the following 1301-residue polypeptide: MTMGDMKTPDFDDLLAAFDIPDMVDPKAAIESGHDDHESHMKQNAHGEDDSHAPSSSDVGVSVIVKNVRNIDSSEGGEKDGHNPTGNGLHNGFLTASSLDSYSKDGAKSLKGDVPASEVTLKDSTFSQFSPISSAEEFDDDEKIEVDDPPDKEDMRSSFRSNVLTGSAPQQDYDKLKALGGENSSKTGLSTSGNVEKNKAVKRETEASSINLSVYEPFKVRKAEDKLKESSDKVLENRVLDGKLSSEKNDTSLPSVAPSKTKSSSKLSSCIAAIAALSAKKAASDSCKEPVANSRESSPLPKEVNDSPRAADKSPESQNLIDGTKKPSLKQPDSPRSISSENSSKGSPSSPAGSTPAIPKVRIKTIKTSSGEIKRTVTRVLPEVDLDSGKKPSEQTASVMASVTSLLSSPASAAVLSSPPRAPLQSAVVTNAVSPAELTPKQVTIKPVATAFLPVSAVKTAGSQVINLKLANNTTVKATVISAASVQSASSAIIKAANAIQQQTVVVPASSLANAKLVPKTVHLANLNLLPQGAQATSELRQVLTKPQQQIKQAIINAAASQPPKKVSRVQVVSSLQSSVVEAFNKVLSSVNPVPVYIPNLSPPANAGITLPTRGYKCLECGDSFALEKSLTQHYDRRSVRIEVTCNHCTKNLVFYNKCSLLSHARGHKEKGVVMQCSHLILKPVPADQMIVSPSSNTSTSTSTLQSPVGAGTHTVTKIQSGITGTVISAPSSTPITPAMPLDEDPSKLCRHSLKCLECNEVFQDETSLATHFQQAADTSGQKTCTICQMLLPNQCSYASHQRIHQHKSPYTCPECGAICRSVHFQTHVTKNCLHYTRRVGFRCVHCNVVYSDVAALKSHIQGSHCEVFYKCPICPMAFKSAPSTHSHAYTQHPGIKIGEPKIIYKCSMCDTVFTLQTLLYRHFDQHIENQKVSVFKCPDCSLLYAQKQLMMDHIKSMHGTLKSIEGPPNLGINLPLSIKPATQNSANQNKEDTKSMNGKEKLEKKSPSPVKKSMETKKVASPGWTCWECDCLFMQRDVYISHVRKEHGKQMKKHPCRQCDKSFSSSHSLCRHNRIKHKGIRKVYACSHCPDSRRTFTKRLMLEKHVQLMHGIKDPDLKEMTDATNEEETEIKEDTKVPSPKRKLEEPVLEFRPPRGAITQPLKKLKINVFKVHKCAVCGFTTENLLQFHEHIPQHKSDGSSYQCRECGLCYTSHVSLSRHLFIVHKLKEPQPVSKQNGAGEDNQQENKPSHEDESPDGAVSDRKCKVCAKTFETEAALNTHMRTHGMAFIKSKRMSSAEK.

Disordered stretches follow at residues 26-206, 223-266, and 281-366; these read PKAA…RETE, AEDK…SSSK, and KAAS…IKTI. The segment covering 32–52 has biased composition (basic and acidic residues); the sequence is SGHDDHESHMKQNAHGEDDSH. Positions 84-101 are enriched in polar residues; sequence PTGNGLHNGFLTASSLDS. A compositionally biased stretch (basic and acidic residues) spans 102-111; the sequence is YSKDGAKSLK. Residues 122-133 show a composition bias toward polar residues; the sequence is KDSTFSQFSPIS. 3 positions are modified to phosphoserine: Ser130, Ser133, and Ser134. A compositionally biased stretch (acidic residues) spans 136–151; that stretch reads EEFDDDEKIEVDDPPD. Positions 158 to 170 are enriched in polar residues; that stretch reads SFRSNVLTGSAPQ. Lys175 is modified (N6-acetyllysine). Positions 182 to 195 are enriched in polar residues; sequence ENSSKTGLSTSGNV. 2 stretches are compositionally biased toward basic and acidic residues: residues 196-206 and 223-250; these read EKNKAVKRETE and AEDK…EKND. Thr205 is modified (phosphothreonine). Phosphoserine is present on residues Ser252, Ser307, and Ser314. Over residues 303–315 the composition is skewed to basic and acidic residues; the sequence is EVNDSPRAADKSP. Over residues 337–359 the composition is skewed to low complexity; that stretch reads SISSENSSKGSPSSPAGSTPAIP. Phosphoserine is present on Ser434. Glycyl lysine isopeptide (Lys-Gly) (interchain with G-Cter in SUMO2) cross-links involve residues Lys459 and Lys516. The C2H2-type 1; degenerate zinc finger occupies 616–635; the sequence is YKCLECGDSFALEKSLTQHY. The segment at 754-779 adopts a C2H2-type 2; degenerate zinc-finger fold; that stretch reads LKCLECNEVFQDETSLATHFQQAADT. 5 C2H2-type zinc fingers span residues 783–805, 842–865, 870–893, 905–927, and 936–959; these read KTCT…QRIH, FRCV…QGSH, YKCP…YTQH, YKCS…FDQH, and FKCP…KSMH. A Glycyl lysine isopeptide (Lys-Gly) (interchain with G-Cter in SUMO2) cross-link involves residue Lys980. The interval 983 to 1017 is disordered; it reads TQNSANQNKEDTKSMNGKEKLEKKSPSPVKKSMET. A compositionally biased stretch (basic and acidic residues) spans 990–1017; it reads NKEDTKSMNGKEKLEKKSPSPVKKSMET. 2 C2H2-type zinc fingers span residues 1025–1048 and 1055–1078; these read WTCW…RKEH and HPCR…RIKH. Residues 1085 to 1111 form a C2H2-type 10; degenerate zinc finger; it reads YACSHCPDSRRTFTKRLMLEKHVQLMH. Ser1140 carries the post-translational modification Phosphoserine. Glycyl lysine isopeptide (Lys-Gly) (interchain with G-Cter in SUMO2) cross-links involve residues Lys1144 and Lys1167. The C2H2-type 11 zinc finger occupies 1203-1226; that stretch reads YQCRECGLCYTSHVSLSRHLFIVH. The segment at 1230–1263 is disordered; that stretch reads EPQPVSKQNGAGEDNQQENKPSHEDESPDGAVSD. A C2H2-type 12 zinc finger spans residues 1264–1286; that stretch reads RKCKVCAKTFETEAALNTHMRTH.

This sequence belongs to the krueppel C2H2-type zinc-finger protein family.

It localises to the nucleus. In terms of biological role, may be involved in transcriptional regulation. The sequence is that of Zinc finger protein 532 (ZNF532) from Homo sapiens (Human).